We begin with the raw amino-acid sequence, 340 residues long: Phosphoribosylformylglycinamidine cyclo-ligase (340 aa).

Belongs to the AIR synthase family.

The protein resides in the cytoplasm. The catalysed reaction is 2-formamido-N(1)-(5-O-phospho-beta-D-ribosyl)acetamidine + ATP = 5-amino-1-(5-phospho-beta-D-ribosyl)imidazole + ADP + phosphate + H(+). It participates in purine metabolism; IMP biosynthesis via de novo pathway; 5-amino-1-(5-phospho-D-ribosyl)imidazole from N(2)-formyl-N(1)-(5-phospho-D-ribosyl)glycinamide: step 2/2. The sequence is that of Phosphoribosylformylglycinamidine cyclo-ligase from Streptococcus pneumoniae serotype 2 (strain D39 / NCTC 7466).